A 102-amino-acid polypeptide reads, in one-letter code: ATP-dependent Clp protease adapter protein ClpS (102 aa).

The protein belongs to the ClpS family. Binds to the N-terminal domain of the chaperone ClpA.

Its function is as follows. Involved in the modulation of the specificity of the ClpAP-mediated ATP-dependent protein degradation. In Shewanella sp. (strain ANA-3), this protein is ATP-dependent Clp protease adapter protein ClpS.